A 170-amino-acid polypeptide reads, in one-letter code: Putative apoptosis inhibitor ORF87 (170 aa).

BIR repeat units lie at residues 22–92 and 104–169; these read RIKS…PVGK and RLKS…KLSS.

Functionally, may act as an apoptosis inhibitor. The protein is Putative apoptosis inhibitor ORF87 of Ostreid herpesvirus 1 (isolate France) (OsHV-1).